Consider the following 359-residue polypeptide: Protein Wnt-8a (359 aa).

An N-terminal signal peptide occupies residues M1–S25. Residues C55 and C66 are joined by a disulfide bond. An N-linked (GlcNAc...) asparagine glycan is attached at N104. Intrachain disulfides connect C105-C113, C115-C133, C181-C195, C183-C190, C260-C298, C276-C291, C295-C337, C313-C328, C315-C325, and C320-C321. The O-palmitoleoyl serine moiety is linked to residue S187. N-linked (GlcNAc...) asparagine glycosylation is found at N263 and N282. An N-linked (GlcNAc...) asparagine glycan is attached at N348.

This sequence belongs to the Wnt family. Post-translationally, palmitoleoylation is required for efficient binding to frizzled receptors. Depalmitoleoylation leads to Wnt signaling pathway inhibition. In terms of processing, proteolytic processing by tiki1 and tiki2 promotes oxidation and formation of large disulfide-bond oligomers, leading to inactivation of wnt8. Expressed in the margin of the pregastrula embryo destined to be the future mesoderm.

Its subcellular location is the secreted. It is found in the extracellular space. It localises to the extracellular matrix. Ligand for members of the frizzled family of seven transmembrane receptors. Required for mesoderm and neural ectoderm patterning during gastrulation. Involved in axis formation during embryonic development, via activation of canonical Wnt/CTNNB1 signaling. May be involved in the specification of the spatial patterns of expression of Gsc and other regulatory genes leading to the establishment of the embryonic axis. In Danio rerio (Zebrafish), this protein is Protein Wnt-8a (wnt8a).